Consider the following 166-residue polypeptide: MMLHSALGLCLLLVTVSSNLAIAIKKEKRPPQTLSRGWGDDITWVQTYEEGLFYAQKSKKPLMVIHHLEDCQYSQALKKVFAQNEEIQEMAQNKFIMLNLMHETTDKNLSPDGQYVPRIMFVDPSLTVRADIAGRYSNRLYTYEPRDLPLLIENMKKALRLIQSEL.

The signal sequence occupies residues 1 to 21; sequence MMLHSALGLCLLLVTVSSNLA. The Prevents secretion from ER signature appears at 163–166; that stretch reads QSEL.

This sequence belongs to the AGR family. Interacts with LYPD3 and DAG1 (alphaDAG1). As to expression, expressed in the lung, in the ciliated cells of the airway epithelium. Expression increased with differentiation of airway epithelial cells. Not detected in the mucous cells. Expressed in ciliated cells in the oviduct. Also detected in stomach, colon, prostate and liver. Expressed in breast, ovary, prostate and liver cancer. Expression is associated with the level of differentiation of breast cancer (at protein level).

The protein resides in the endoplasmic reticulum. Required for calcium-mediated regulation of ciliary beat frequency and mucociliary clearance in the airway. Might be involved in the regulation of intracellular calcium in tracheal epithelial cells. The protein is Anterior gradient protein 3 (AGR3) of Homo sapiens (Human).